The primary structure comprises 136 residues: Histone H3 (136 aa).

Positions 1–43 (MARTKQTARKNVGGKAPRKHIGQKSARKTASTTAGMKKPHRYR) are disordered. Residue Lys-10 is modified to N6-methylated lysine. Lys-15 and Lys-24 each carry N6-acetyllysine. The span at 16–27 (APRKHIGQKSAR) shows a compositional bias: basic residues. N6-methylated lysine is present on residues Lys-28 and Lys-37.

The protein belongs to the histone H3 family. In terms of assembly, the nucleosome is a histone octamer containing two molecules each of H2A, H2B, H3 and H4 assembled in one H3-H4 heterotetramer and two H2A-H2B heterodimers. The octamer wraps approximately 147 bp of DNA.

The protein resides in the nucleus. Its subcellular location is the chromosome. In terms of biological role, core component of nucleosome. Nucleosomes wrap and compact DNA into chromatin, limiting DNA accessibility to the cellular machineries which require DNA as a template. Histones thereby play a central role in transcription regulation, DNA repair, DNA replication and chromosomal stability. DNA accessibility is regulated via a complex set of post-translational modifications of histones, also called histone code, and nucleosome remodeling. This chain is Histone H3, found in Euplotes crassus.